Reading from the N-terminus, the 378-residue chain is Stimulator of interferon genes protein (378 aa).

Topologically, residues 1-17 are cytoplasmic; the sequence is MPHSSLHPSIPQPRGLR. The tract at residues 1 to 190 is mediates interaction with ZDHHC1 and ZDHHC11; it reads MPHSSLHPSI…IYNQFHNNTL (190 aa). A helical transmembrane segment spans residues 18–34; that stretch reads AQKAALVLLSACLVALW. Topologically, residues 35-44 are lumenal; that stretch reads GLGEPPDYTL. The helical transmembrane segment at 45-69 threads the bilayer; the sequence is KWLVLHLASQQMGLLIKGICSLAEE. Over 70 to 91 the chain is Cytoplasmic; that stretch reads LCHVHSRYHGSYWRAVRACLCS. Cys88 carries the S-palmitoyl cysteine lipid modification. The helical transmembrane segment at 92 to 106 threads the bilayer; sequence SMRCGALLLLSCYFY. Residues 107–116 lie on the Lumenal side of the membrane; it reads CSLPNMADLP. The chain crosses the membrane as a helical span at residues 117–134; it reads FTWMLALLGLSQALNILL. Topologically, residues 135–378 are cytoplasmic; sequence GLQGLAPAEV…KPLPLRSDVF (244 aa). Residue Lys150 forms a Glycyl lysine isopeptide (Lys-Gly) (interchain with G-Cter in ubiquitin) linkage. The tract at residues 153–339 is cyclic dinucleotide-binding domain (CBD); the sequence is FNVAHGLAWS…LQHLRQEERE (187 aa). Residues Ser162 and Tyr167 each contribute to the 2',3'-cGAMP site. 3',3'-c-di-GMP is bound by residues Ser162 and Tyr167. Tyr167 contributes to the 2',3'-cUAMP binding site. Lys236 participates in a covalent cross-link: Glycyl lysine isopeptide (Lys-Gly) (interchain with G-Cter in ubiquitin). 2',3'-cGAMP is bound by residues Arg238 and Thr263. 2 residues coordinate 2',3'-cUAMP: Arg238 and Thr263. 3',3'-c-di-GMP is bound by residues 238-241 and Thr263; that span reads RVYT. A C-terminal tail (CTT) region spans residues 339-378; the sequence is EVTMGSTETSVMPGSSVLSQEPELLISGLEKPLPLRSDVF. Ser354 is subject to Phosphoserine. Phosphoserine; by TBK1 is present on residues Ser357 and Ser365. The short motif at 362–365 is the pLxIS motif element; the sequence is LLIS.

The protein belongs to the STING family. Homodimer; forms a homodimer in absence of cyclic nucleotide (c-di-GMP or cGAMP); 'Lys-63'-linked ubiquitination at Lys-150 is required for homodimerization. Homotetramer; in presence of cyclic nucleotide (c-di-GMP or cGAMP), forms tetramers and higher-order oligomers through side-by-side packing. Interacts (when phosphorylated) with IRF3; following activation and phosphorylation on the pLxIS motif by TBK1, recruits IRF3. Interacts with RIGI, MAVS and SSR2. Interacts with RNF5 and TRIM56. Interacts with TBK1; when homodimer, leading to subsequent production of IFN-beta. Interacts with IFIT1 and IFIT2. Interacts with TRIM29; this interaction induces STING1 ubiquitination and subsequent degradation. Associates with the MHC-II complex. Interacts with STEEP1; interaction takes place upon cGAMP-activation and STING1 phosphorylation by MAP3K7/TAK1 and promotes STING1 translocation to COPII vesicles. Interacts with SEC24A, SEC24B and SEC24C; promoting translocation to COPII vesicles. Interacts (when ubiquitinated) with SQSTM1; leading to relocalization to autophagosomes. Interacts with SURF4. Interacts with HNRNPA2B1. Interacts with ZDHHC1; ZDHHC1 constitutively interacts with STING1 and in presence of DNA viruses activates it by promoting its cGAMP-induced oligomerization and the recruitment of downstream signaling components. Interacts with ZDHHC11; in presence of DNA viruses promotes the recruitment of IRF3 to STING1. Interacts with TOMM70. Interacts with TAB1; promoting recruitment of TAB1 to the endoplasmic reticulum membrane and subsequent activation of MAP3K7/TAK1. Interacts (via transmembrane domain) with TMEM203. Interacts with DDX41. Phosphorylation by TBK1 leads to activation and production of IFN-beta. Following cyclic nucleotide (c-di-GMP or cGAMP)-binding, activation and translocation from the endoplasmic reticulum, STING1 is phosphorylated by TBK1 at Ser-365 in the pLxIS motif. The phosphorylated pLxIS motif constitutes an IRF3-binding motif, leading to recruitment of the transcription factor IRF3 to induce type-I interferons and other cytokines. Phosphorylated on tyrosine residues upon MHC-II aggregation. Dephosphorylation by PPP6C leads to inactivation and decreased production of IFN-beta. Phosphorylation at Ser-357 is also required to activate IRF3. Phosphorylation at Ser-354 by MAP3K7/TAK1 facilitates its interaction with STEEP1, promoting STING1 translocation to COPII vesicles. In terms of processing, ubiquitinated. Ubiquitinated via 'Lys-63'-linked ubiquitin chains in response to double-stranded DNA treatment, leading to relocalization to autophagosomes and subsequent degradation; this process is dependent on SQSTM1. 'Lys-63'-linked ubiquitination mediated by TRIM56 at Lys-150 promotes homodimerization and recruitment of the antiviral kinase TBK1 and subsequent production of IFN-beta. 'Lys-48'-linked polyubiquitination at Lys-150 occurring after viral infection is mediated by RNF5 and leads to proteasomal degradation. 'Lys-11'-linked polyubiquitination at Lys-150 by RNF26 leads to stabilize STING1: it protects STING1 from RNF5-mediated 'Lys-48'-linked polyubiquitination. 'Lys-33'-linked and 'Lys-48'-linked deubiquitinated by USP20; leading to its stabilization and promotion of innate antiviral response. 'Lys-48'-linked deubiquitinated by USP44; leading to its stabilization and promotion of innate antiviral response. 'Lys-63'-linked deubiquitinated by USP49; leading to inhibition of the subsequent recruitment of TBK1 to the signaling complex. 'Lys-63'-linked ubiquitination mediated by RNF39 promotes the activation of the cGAS-STING pathway. Post-translationally, palmitoylation takes place in the Golgi apparatus and creates a platform for the recruitment of TBK1.

The protein localises to the endoplasmic reticulum membrane. Its subcellular location is the cytoplasm. The protein resides in the perinuclear region. It is found in the endoplasmic reticulum-Golgi intermediate compartment membrane. It localises to the golgi apparatus membrane. The protein localises to the cytoplasmic vesicle. Its subcellular location is the autophagosome membrane. The protein resides in the mitochondrion outer membrane. It is found in the cell membrane. It catalyses the reaction H(+)(in) = H(+)(out). Its function is as follows. Facilitator of innate immune signaling that acts as a sensor of cytosolic DNA from bacteria and viruses and promotes the production of type I interferon (IFN-alpha and IFN-beta). Innate immune response is triggered in response to non-CpG double-stranded DNA from viruses and bacteria delivered to the cytoplasm. Acts by binding cyclic dinucleotides: recognizes and binds cyclic di-GMP (c-di-GMP), a second messenger produced by bacteria, cyclic UMP-AMP (2',3'-cUAMP), and cyclic GMP-AMP (cGAMP), a messenger produced by CGAS in response to DNA virus in the cytosol. Upon binding to c-di-GMP or cGAMP, STING oligomerizes, translocates from the endoplasmic reticulum and is phosphorylated by TBK1 on the pLxIS motif, leading to recruitment and subsequent activation of the transcription factor IRF3 to induce expression of type I interferon and exert a potent anti-viral state. Exhibits 2',3' phosphodiester linkage-specific ligand recognition: can bind both 2'-3' linked cGAMP (2'-3'-cGAMP) and 3'-3' linked cGAMP but is preferentially activated by 2'-3' linked cGAMP. The preference for 2'-3'-cGAMP, compared to other linkage isomers is probably due to the ligand itself, whichs adopts an organized free-ligand conformation that resembles the STING1-bound conformation and pays low energy costs in changing into the active conformation. In addition to promote the production of type I interferons, plays a direct role in autophagy. Following cGAMP-binding, STING1 buds from the endoplasmic reticulum into COPII vesicles, which then form the endoplasmic reticulum-Golgi intermediate compartment (ERGIC). The ERGIC serves as the membrane source for WIPI2 recruitment and LC3 lipidation, leading to formation of autophagosomes that target cytosolic DNA or DNA viruses for degradation by the lysosome. Promotes autophagy by acting as a proton channel that directs proton efflux from the Golgi to facilitate MAP1LC3B/LC3B lipidation. The autophagy- and interferon-inducing activities can be uncoupled and autophagy induction is independent of TBK1 phosphorylation. Autophagy is also triggered upon infection by bacteria: following c-di-GMP-binding, which is produced by live Gram-positive bacteria, promotes reticulophagy. May be involved in translocon function, the translocon possibly being able to influence the induction of type I interferons. May be involved in transduction of apoptotic signals via its association with the major histocompatibility complex class II (MHC-II). The protein is Stimulator of interferon genes protein of Bos taurus (Bovine).